Here is a 223-residue protein sequence, read N- to C-terminus: Translation initiation factor 6 (223 aa).

The protein belongs to the eIF-6 family.

Its function is as follows. Binds to the 50S ribosomal subunit and prevents its association with the 30S ribosomal subunit to form the 70S initiation complex. This Saccharolobus islandicus (strain M.16.27) (Sulfolobus islandicus) protein is Translation initiation factor 6.